Reading from the N-terminus, the 262-residue chain is Cell division protein FtsQ (262 aa).

Residues 1–20 (MSWSDKRRHWRARKSQVNWY) are Cytoplasmic-facing. Residues 21-41 (LWSGIGFLSLVIGSFVFGGYL) form a helical membrane-spanning segment. The Periplasmic portion of the chain corresponds to 42–262 (LHKFLNDAST…EPIINDEKPR (221 aa)). One can recognise a POTRA domain in the interval 52–121 (LPIEAVAIKG…AKLRVYLQEQ (70 aa)).

This sequence belongs to the FtsQ/DivIB family. FtsQ subfamily. As to quaternary structure, part of a complex composed of FtsB, FtsL and FtsQ.

Its subcellular location is the cell inner membrane. In terms of biological role, essential cell division protein. May link together the upstream cell division proteins, which are predominantly cytoplasmic, with the downstream cell division proteins, which are predominantly periplasmic. May control correct divisome assembly. The sequence is that of Cell division protein FtsQ from Shewanella oneidensis (strain ATCC 700550 / JCM 31522 / CIP 106686 / LMG 19005 / NCIMB 14063 / MR-1).